The primary structure comprises 89 residues: Small ribosomal subunit protein uS15 (89 aa).

Belongs to the universal ribosomal protein uS15 family. As to quaternary structure, part of the 30S ribosomal subunit. Forms a bridge to the 50S subunit in the 70S ribosome, contacting the 23S rRNA.

Functionally, one of the primary rRNA binding proteins, it binds directly to 16S rRNA where it helps nucleate assembly of the platform of the 30S subunit by binding and bridging several RNA helices of the 16S rRNA. In terms of biological role, forms an intersubunit bridge (bridge B4) with the 23S rRNA of the 50S subunit in the ribosome. In Jannaschia sp. (strain CCS1), this protein is Small ribosomal subunit protein uS15.